A 133-amino-acid chain; its full sequence is Small ribosomal subunit protein uS11 (133 aa).

The protein belongs to the universal ribosomal protein uS11 family. As to quaternary structure, part of the 30S ribosomal subunit. Interacts with proteins S7 and S18. Binds to IF-3.

Located on the platform of the 30S subunit, it bridges several disparate RNA helices of the 16S rRNA. Forms part of the Shine-Dalgarno cleft in the 70S ribosome. In Bordetella avium (strain 197N), this protein is Small ribosomal subunit protein uS11.